The primary structure comprises 266 residues: Small ribosomal subunit protein uS2 (266 aa).

A disordered region spans residues R229–E254. Residues T237–V247 are compositionally biased toward acidic residues.

This sequence belongs to the universal ribosomal protein uS2 family.

The polypeptide is Small ribosomal subunit protein uS2 (Flavobacterium psychrophilum (strain ATCC 49511 / DSM 21280 / CIP 103535 / JIP02/86)).